A 361-amino-acid polypeptide reads, in one-letter code: G2/mitotic-specific cyclin-B (361 aa).

It belongs to the cyclin family. Cyclin AB subfamily.

In terms of biological role, essential for the control of the cell cycle at the G2/M (mitosis) transition. Interacts with the CDC2 protein kinase to form MPF. G2/M cyclins accumulate steadily during G2 and are abruptly destroyed at mitosis. The chain is G2/mitotic-specific cyclin-B from Hydra vulgaris (Hydra).